A 1048-amino-acid polypeptide reads, in one-letter code: Platelet-derived growth factor receptor beta (1048 aa).

The signal sequence occupies residues 1–30; sequence MLRASAMRAAVLHLTVALAALLSSCTTVSC. At 31–528 the chain is on the extracellular side; it reads LKIVPEEKQL…LVSSSLFSQV (498 aa). In terms of domain architecture, Ig-like C2-type 1 spans 35–124; that stretch reads PEEKQLILAE…EIKEVAVFVP (90 aa). Intrachain disulfides connect Cys-52–Cys-108 and Cys-153–Cys-194. Residues Asn-87, Asn-159, Asn-224, and Asn-239 are each glycosylated (N-linked (GlcNAc...) asparagine). 2 Ig-like C2-type domains span residues 216–309 and 319–406; these read PEDI…ASVN and AVKS…KEVT. Cysteines 240 and 293 form a disulfide. N-linked (GlcNAc...) asparagine glycosylation is found at Asn-309, Asn-327, and Asn-457. An intrachain disulfide couples Cys-434 to Cys-503. A helical transmembrane segment spans residues 529-549; it reads VLLAVVLTLVPIIIMSIIILI. Residues 550–1048 lie on the Cytoplasmic side of the membrane; that stretch reads AVWKKKPRYE…PIPDPKPEKS (499 aa). 3 positions are modified to phosphotyrosine; by autocatalysis: Tyr-558, Tyr-575, and Tyr-577. Positions 596-957 constitute a Protein kinase domain; the sequence is LVLGRTLGSG…FLVHCVGDML (362 aa). ATP-binding positions include 602-610 and Lys-630; that span reads LGSGAFGRV. 5 positions are modified to phosphotyrosine; by autocatalysis: Tyr-735, Tyr-746, Tyr-758, Tyr-766, and Tyr-770. Residue Asp-821 is the Proton acceptor of the active site. A phosphotyrosine; by autocatalysis mark is found at Tyr-852 and Tyr-1036.

The protein belongs to the protein kinase superfamily. Tyr protein kinase family. CSF-1/PDGF receptor subfamily. Interacts with homodimeric PDGFB and PDGFD, and with heterodimers formed by PDGFA and PDGFB. Monomer in the absence of bound ligand. Interaction with homodimeric PDGFB, heterodimers formed by PDGFA and PDGFB or homodimeric PDGFD, leads to receptor dimerization, where both PDGFRA homodimers and heterodimers with PDGFRB are observed. In terms of processing, ubiquitinated. After autophosphorylation, the receptor is polyubiquitinated, leading to its degradation. Autophosphorylated on tyrosine residues upon ligand binding. Autophosphorylation occurs in trans, i.e. one subunit of the dimeric receptor phosphorylates tyrosine residues on the other subunit.

The protein localises to the cell membrane. It is found in the cytoplasmic vesicle. The protein resides in the lysosome lumen. It catalyses the reaction L-tyrosyl-[protein] + ATP = O-phospho-L-tyrosyl-[protein] + ADP + H(+). With respect to regulation, present in an inactive conformation in the absence of bound ligand. Binding of PDGFB and/or PDGFD leads to dimerization and activation by autophosphorylation on tyrosine residues. Tyrosine-protein kinase that acts as a cell-surface receptor for homodimeric PDGFB and PDGFD and for heterodimers formed by PDGFA and PDGFB, and plays an essential role in the regulation of embryonic development, cell proliferation, survival, differentiation, chemotaxis and migration. Plays an essential role in blood vessel development by promoting proliferation, migration and recruitment of pericytes and smooth muscle cells to endothelial cells. Required for normal development of the cardiovascular system. Required for normal recruitment of pericytes (mesangial cells) in the kidney glomerulus, and for normal formation of a branched network of capillaries in kidney glomeruli. Promotes rearrangement of the actin cytoskeleton and the formation of membrane ruffles. Binding of its cognate ligands - homodimeric PDGFB, heterodimers formed by PDGFA and PDGFB or homodimeric PDGFD -leads to the activation of several signaling cascades; the response depends on the nature of the bound ligand and is modulated by the formation of heterodimers between PDGFRA and PDGFRB. Receptor signaling is down-regulated by protein phosphatases that dephosphorylate the receptor and its down-stream effectors, and by rapid internalization of the activated receptor. This Takifugu rubripes (Japanese pufferfish) protein is Platelet-derived growth factor receptor beta (pdgfrb).